A 496-amino-acid chain; its full sequence is Putative aldehyde dehydrogenase-like protein C922.07c (496 aa).

Position 241 to 246 (241 to 246 (GSTKVG)) interacts with NAD(+). Glutamate 263 (proton acceptor) is an active-site residue. Cysteine 297 (nucleophile) is an active-site residue.

This sequence belongs to the aldehyde dehydrogenase family.

It localises to the cytoplasm. The protein resides in the nucleus. This Schizosaccharomyces pombe (strain 972 / ATCC 24843) (Fission yeast) protein is Putative aldehyde dehydrogenase-like protein C922.07c.